We begin with the raw amino-acid sequence, 520 residues long: T-box transcription factor TBX22 (520 aa).

Residues 1-91 (MALSSRARAF…NSSESLEEKD (91 aa)) form a disordered region. Basic and acidic residues predominate over residues 33 to 49 (PELREKKGGEEEEERRS). Residues 67-84 (STSASSGCGSDSGYGNSS) are compositionally biased toward low complexity. The segment at residues 96–283 (LQGSELWKRF…RNPFAKGFRD (188 aa)) is a DNA-binding region (T-box).

Seems to be expressed at a low level.

Its subcellular location is the nucleus. Functionally, probable transcriptional regulator involved in developmental processes. This is major determinant crucial to palatogenesis. This is T-box transcription factor TBX22 (TBX22) from Homo sapiens (Human).